Reading from the N-terminus, the 421-residue chain is Core protease I7 homolog (421 aa).

Catalysis depends on residues H242, D249, and C329.

It belongs to the peptidase C57 family.

Its subcellular location is the virion. Functionally, late protein responsible for processing most or all of the viral core and membrane proteins known to undergo morphogenesis-associated proteolysis. These proteolytic events are involved in the transformation of immature virions (IV) into mature virions (MV). The protein is Core protease I7 homolog of Fowlpox virus (strain NVSL) (FPV).